The primary structure comprises 549 residues: Pyrophosphate--fructose 6-phosphate 1-phosphotransferase (549 aa).

Glycine 78 contacts diphosphate. Aspartate 172 contacts Mg(2+). Substrate-binding positions include 200–202 (TID), 239–240 (KY), 247–249 (MGR), glutamate 308, and 421–424 (YEGR). Aspartate 202 serves as the catalytic Proton acceptor.

Belongs to the phosphofructokinase type A (PFKA) family. PPi-dependent PFK group II subfamily. Clade 'Long' sub-subfamily. As to quaternary structure, homodimer. Mg(2+) serves as cofactor.

The protein resides in the cytoplasm. It carries out the reaction beta-D-fructose 6-phosphate + diphosphate = beta-D-fructose 1,6-bisphosphate + phosphate + H(+). It functions in the pathway carbohydrate degradation; glycolysis; D-glyceraldehyde 3-phosphate and glycerone phosphate from D-glucose: step 3/4. Its activity is regulated as follows. Non-allosteric. Its function is as follows. Catalyzes the phosphorylation of D-fructose 6-phosphate, the first committing step of glycolysis. Uses inorganic phosphate (PPi) as phosphoryl donor instead of ATP like common ATP-dependent phosphofructokinases (ATP-PFKs), which renders the reaction reversible, and can thus function both in glycolysis and gluconeogenesis. Consistently, PPi-PFK can replace the enzymes of both the forward (ATP-PFK) and reverse (fructose-bisphosphatase (FBPase)) reactions. The protein is Pyrophosphate--fructose 6-phosphate 1-phosphotransferase of Porphyromonas gingivalis (Bacteroides gingivalis).